We begin with the raw amino-acid sequence, 334 residues long: MSADKQKLTIRLCGPRGFCAGVDRAIQIVVLALKKYGPPVYVRHEIVHNRYVVEGLQQRGAIFIEDLDEIPEEHRERPVVFSAHGVPKSVPADAQARNLFYLDATCPLVSKVHKQAMRHQRLGRHVLLIGHAGHPEVIGTMGQLPHGAVTLIETVEDALHFPPPAGVELGYVSQTTLSLEDTAEIISALERRFDNIHAPAAESICYATTNRQNAVKAAAPGSDLFLVVGAPNSSNSRRLVEVAERAGARRALLVQRASEIPWEEIADLSVLGLSAGASAPEIIVDEIIAAFADSYDVSVELAITAEEPENFPVMRALRDVELTKADMAFVNGVG.

C19 provides a ligand contact to [4Fe-4S] cluster. (2E)-4-hydroxy-3-methylbut-2-enyl diphosphate is bound by residues H48 and H84. Positions 48 and 84 each coordinate dimethylallyl diphosphate. Isopentenyl diphosphate is bound by residues H48 and H84. C106 is a binding site for [4Fe-4S] cluster. H134 contributes to the (2E)-4-hydroxy-3-methylbut-2-enyl diphosphate binding site. Position 134 (H134) interacts with dimethylallyl diphosphate. H134 serves as a coordination point for isopentenyl diphosphate. E136 acts as the Proton donor in catalysis. T175 contributes to the (2E)-4-hydroxy-3-methylbut-2-enyl diphosphate binding site. [4Fe-4S] cluster is bound at residue C205. (2E)-4-hydroxy-3-methylbut-2-enyl diphosphate is bound by residues S233, S234, N235, and S278. Dimethylallyl diphosphate-binding residues include S233, S234, N235, and S278. The isopentenyl diphosphate site is built by S233, S234, N235, and S278.

This sequence belongs to the IspH family. The cofactor is [4Fe-4S] cluster.

It catalyses the reaction isopentenyl diphosphate + 2 oxidized [2Fe-2S]-[ferredoxin] + H2O = (2E)-4-hydroxy-3-methylbut-2-enyl diphosphate + 2 reduced [2Fe-2S]-[ferredoxin] + 2 H(+). It carries out the reaction dimethylallyl diphosphate + 2 oxidized [2Fe-2S]-[ferredoxin] + H2O = (2E)-4-hydroxy-3-methylbut-2-enyl diphosphate + 2 reduced [2Fe-2S]-[ferredoxin] + 2 H(+). The protein operates within isoprenoid biosynthesis; dimethylallyl diphosphate biosynthesis; dimethylallyl diphosphate from (2E)-4-hydroxy-3-methylbutenyl diphosphate: step 1/1. It participates in isoprenoid biosynthesis; isopentenyl diphosphate biosynthesis via DXP pathway; isopentenyl diphosphate from 1-deoxy-D-xylulose 5-phosphate: step 6/6. Functionally, catalyzes the conversion of 1-hydroxy-2-methyl-2-(E)-butenyl 4-diphosphate (HMBPP) into a mixture of isopentenyl diphosphate (IPP) and dimethylallyl diphosphate (DMAPP). Acts in the terminal step of the DOXP/MEP pathway for isoprenoid precursor biosynthesis. This Chelativorans sp. (strain BNC1) protein is 4-hydroxy-3-methylbut-2-enyl diphosphate reductase.